Reading from the N-terminus, the 223-residue chain is Octanoyltransferase (223 aa).

Residues 35-214 enclose the BPL/LPL catalytic domain; sequence GEARELIWLL…HFPAMLAGLR (180 aa). Substrate is bound by residues 74–81, 145–147, and 158–160; these read RGGRYTYH, AIG, and GFS. The active-site Acyl-thioester intermediate is C176.

It belongs to the LipB family.

The protein resides in the cytoplasm. It carries out the reaction octanoyl-[ACP] + L-lysyl-[protein] = N(6)-octanoyl-L-lysyl-[protein] + holo-[ACP] + H(+). It functions in the pathway protein modification; protein lipoylation via endogenous pathway; protein N(6)-(lipoyl)lysine from octanoyl-[acyl-carrier-protein]: step 1/2. Catalyzes the transfer of endogenously produced octanoic acid from octanoyl-acyl-carrier-protein onto the lipoyl domains of lipoate-dependent enzymes. Lipoyl-ACP can also act as a substrate although octanoyl-ACP is likely to be the physiological substrate. The chain is Octanoyltransferase from Rhizorhabdus wittichii (strain DSM 6014 / CCUG 31198 / JCM 15750 / NBRC 105917 / EY 4224 / RW1) (Sphingomonas wittichii).